The primary structure comprises 318 residues: Cobalamin biosynthesis protein CobD (318 aa).

The next 5 membrane-spanning stretches (helical) occupy residues 56-76 (VLWLLVVGITWLVSWGFLWLM), 78-98 (EINPWLGWLAQVWMIYTLLAG), 153-173 (VDGVIAPLFFLMLGGAPLAMA), 204-224 (LANWLPARLSWVLLSAAAWLI), and 298-318 (MMASLLALLLFALTHLLLVGI).

This sequence belongs to the CobD/CbiB family.

It is found in the cell membrane. It participates in cofactor biosynthesis; adenosylcobalamin biosynthesis. Its function is as follows. Converts cobyric acid to cobinamide by the addition of aminopropanol on the F carboxylic group. This chain is Cobalamin biosynthesis protein CobD, found in Yersinia enterocolitica serotype O:8 / biotype 1B (strain NCTC 13174 / 8081).